Consider the following 663-residue polypeptide: Translation factor GUF1 homolog, mitochondrial (663 aa).

One can recognise a tr-type G domain in the interval 64–250; sequence EKIRNFSIIA…AVIERIPPPP (187 aa). GTP is bound by residues 73–80, 143–147, and 197–200; these read AHIDHGKS, DTPGH, and NKID.

It belongs to the TRAFAC class translation factor GTPase superfamily. Classic translation factor GTPase family. LepA subfamily.

The protein localises to the mitochondrion inner membrane. The catalysed reaction is GTP + H2O = GDP + phosphate + H(+). Its function is as follows. Promotes mitochondrial protein synthesis. May act as a fidelity factor of the translation reaction, by catalyzing a one-codon backward translocation of tRNAs on improperly translocated ribosomes. Binds to mitochondrial ribosomes in a GTP-dependent manner. In Arabidopsis thaliana (Mouse-ear cress), this protein is Translation factor GUF1 homolog, mitochondrial.